Here is a 284-residue protein sequence, read N- to C-terminus: Putative cysteine-rich repeat secretory protein 7 (284 aa).

The first 24 residues, 1 to 24, serve as a signal peptide directing secretion; sequence MARIILTAPLFYFFFSLLSHQTMS. 2 consecutive Gnk2-homologous domains span residues 26-128 and 134-244; these read PQHM…NVSF and SKPV…TFVL. Positions 247–284 are disordered; it reads PAPSPSSLPPISPTSSPPLSLPPQLPPPLSQPPPPLST.

Belongs to the cysteine-rich repeat secretory protein family.

The protein resides in the secreted. In Arabidopsis thaliana (Mouse-ear cress), this protein is Putative cysteine-rich repeat secretory protein 7 (CRRSP7).